The primary structure comprises 312 residues: DNA-directed RNA polymerase subunit alpha (312 aa).

The tract at residues 1–225 (MIEFEKPNIT…VEHFKVFESA (225 aa)) is alpha N-terminal domain (alpha-NTD). Positions 243-312 (KEKKLEMTIE…DLGLSLRQED (70 aa)) are alpha C-terminal domain (alpha-CTD).

The protein belongs to the RNA polymerase alpha chain family. Homodimer. The RNAP catalytic core consists of 2 alpha, 1 beta, 1 beta' and 1 omega subunit. When a sigma factor is associated with the core the holoenzyme is formed, which can initiate transcription.

It catalyses the reaction RNA(n) + a ribonucleoside 5'-triphosphate = RNA(n+1) + diphosphate. Functionally, DNA-dependent RNA polymerase catalyzes the transcription of DNA into RNA using the four ribonucleoside triphosphates as substrates. The sequence is that of DNA-directed RNA polymerase subunit alpha from Lactobacillus helveticus (strain DPC 4571).